A 301-amino-acid polypeptide reads, in one-letter code: Glycine--tRNA ligase alpha subunit (301 aa).

This sequence belongs to the class-II aminoacyl-tRNA synthetase family. In terms of assembly, tetramer of two alpha and two beta subunits.

It localises to the cytoplasm. The enzyme catalyses tRNA(Gly) + glycine + ATP = glycyl-tRNA(Gly) + AMP + diphosphate. This chain is Glycine--tRNA ligase alpha subunit, found in Alteromonas mediterranea (strain DSM 17117 / CIP 110805 / LMG 28347 / Deep ecotype).